A 138-amino-acid chain; its full sequence is Transcription antitermination protein NusB (138 aa).

This sequence belongs to the NusB family.

Functionally, involved in transcription antitermination. Required for transcription of ribosomal RNA (rRNA) genes. Binds specifically to the boxA antiterminator sequence of the ribosomal RNA (rrn) operons. In Colwellia psychrerythraea (strain 34H / ATCC BAA-681) (Vibrio psychroerythus), this protein is Transcription antitermination protein NusB.